Consider the following 798-residue polypeptide: RNA cytosine-C(5)-methyltransferase NSUN2 (798 aa).

Residues 1-13 (MGRRNRRNRQRHQ) are compositionally biased toward basic residues. Residues 1–30 (MGRRNRRNRQRHQRSTEQRSPAEEEQRRKA) form a disordered region. A compositionally biased stretch (basic and acidic residues) spans 14 to 30 (RSTEQRSPAEEEQRRKA). S-adenosyl-L-methionine-binding positions include 186–192 (CAAPGSK), aspartate 217, aspartate 244, and aspartate 270. Residue cysteine 323 is the Nucleophile of the active site. 2 disordered regions span residues 476-499 (DEPA…SSKT) and 723-798 (KACD…ESVD). The span at 723–747 (KACDEEHIDEKMDIDGAKEESKELS) shows a compositional bias: basic and acidic residues. Positions 751–762 (SGDDEDPKEEDV) are enriched in acidic residues. Basic and acidic residues predominate over residues 763–772 (IDRGVLEHVA).

Belongs to the class I-like SAM-binding methyltransferase superfamily. RsmB/NOP family. TRM4 subfamily.

It localises to the nucleus. Its subcellular location is the nucleolus. It is found in the cytoplasm. The protein localises to the mitochondrion. The protein resides in the cytoskeleton. It localises to the spindle. Its subcellular location is the secreted. It is found in the extracellular exosome. It carries out the reaction cytidine(48) in tRNA + S-adenosyl-L-methionine = 5-methylcytidine(48) in tRNA + S-adenosyl-L-homocysteine + H(+). The catalysed reaction is cytidine(49) in tRNA + S-adenosyl-L-methionine = 5-methylcytidine(49) in tRNA + S-adenosyl-L-homocysteine + H(+). The enzyme catalyses cytidine(50) in tRNA + S-adenosyl-L-methionine = 5-methylcytidine(50) in tRNA + S-adenosyl-L-homocysteine + H(+). It catalyses the reaction cytidine(34) in tRNA precursor + S-adenosyl-L-methionine = 5-methylcytidine(34) in tRNA precursor + S-adenosyl-L-homocysteine + H(+). It carries out the reaction a cytidine in mRNA + S-adenosyl-L-methionine = a 5-methylcytidine in mRNA + S-adenosyl-L-homocysteine + H(+). RNA cytosine C(5)-methyltransferase that methylates cytosine to 5-methylcytosine (m5C) in various RNAs, such as tRNAs, mRNAs and some long non-coding RNAs (lncRNAs). Involved in various processes, such as epidermal stem cell differentiation, testis differentiation and maternal to zygotic transition during early development: acts by increasing protein synthesis; cytosine C(5)-methylation promoting tRNA stability and preventing mRNA decay. Methylates cytosine to 5-methylcytosine (m5C) at positions 34 and 48 of intron-containing tRNA(Leu)(CAA) precursors, and at positions 48, 49 and 50 of tRNA(Gly)(GCC) precursors. tRNA methylation is required generation of RNA fragments derived from tRNAs (tRFs). Also mediates C(5)-methylation of mitochondrial tRNAs. Catalyzes cytosine C(5)-methylation of mRNAs, leading to stabilize them and prevent mRNA decay. Cytosine C(5)-methylation of mRNAs also regulates mRNA export. Also mediates cytosine C(5)-methylation of non-coding RNAs, such as vault RNAs (vtRNAs), promoting their processing into regulatory small RNAs. Required for proper spindle assembly and chromosome segregation, independently of its methyltransferase activity. This chain is RNA cytosine-C(5)-methyltransferase NSUN2, found in Xenopus tropicalis (Western clawed frog).